Consider the following 290-residue polypeptide: MGSSKKVTLSVLSREQSEGVGARVRRSIGRPELKNLDPFLLFDEFKGGRPGGFPDHPHRGFETVSYLLEGGSMAHEDFCGHTGKMNPGDLQWMTAGRGILHAEMPCSEEPAHGLQLWVNLRSSEKMVEPQYQELKSEEIPKPSKDGVTVAVISGEALGIKSKVYTRTPTLYLDFKLDPGAKHSQPIPKGWTSFIYTISGDVYIGPDDAQQKIEPHHTAVLGEGDSVQVENKDPKRSHFVLIAGEPLREPVIQHGPFVMNTNEEISQAILDFRNAKNGFERAKTWKSKIGN.

Residues His-56, His-58, His-101, and Glu-103 each contribute to the Fe cation site.

It belongs to the pirin family. As to quaternary structure, may interact with NF1/CTF1. Interacts with BCL3. Identified in a complex comprised of PIR, BLC3, NFKB1 and target DNA. Fe cation serves as cofactor. Highly expressed in a subset of melanomas. Detected at very low levels in most tissues (at protein level). Expressed in all tissues, with highest level of expression in heart and liver.

The protein localises to the nucleus. The protein resides in the cytoplasm. It carries out the reaction quercetin + O2 = 2-(3,4-dihydroxybenzoyloxy)-4,6-dihydroxybenzoate + CO. The protein operates within flavonoid metabolism; quercetin degradation. With respect to regulation, inhibited by kojic acid, sodium diethyldithiocarbamate and 1,10-phenanthroline monohydrochloride. Functionally, transcriptional coregulator of NF-kappa-B which facilitates binding of NF-kappa-B proteins to target kappa-B genes in a redox-state-dependent manner. May be required for efficient terminal myeloid maturation of hematopoietic cells. Has quercetin 2,3-dioxygenase activity (in vitro). This Homo sapiens (Human) protein is Pirin (PIR).